Reading from the N-terminus, the 293-residue chain is Nitrogenase iron protein (293 aa).

10–17 (GKGGIGKS) contacts ATP. Position 98 (C98) interacts with [4Fe-4S] cluster. Position 101 is an ADP-ribosylarginine; by dinitrogenase reductase ADP-ribosyltransferase (R101). A [4Fe-4S] cluster-binding site is contributed by C133.

Belongs to the NifH/BchL/ChlL family. As to quaternary structure, homodimer. [4Fe-4S] cluster is required as a cofactor. Post-translationally, the reversible ADP-ribosylation of Arg-101 inactivates the nitrogenase reductase and regulates nitrogenase activity.

It catalyses the reaction N2 + 8 reduced [2Fe-2S]-[ferredoxin] + 16 ATP + 16 H2O = H2 + 8 oxidized [2Fe-2S]-[ferredoxin] + 2 NH4(+) + 16 ADP + 16 phosphate + 6 H(+). Functionally, the key enzymatic reactions in nitrogen fixation are catalyzed by the nitrogenase complex, which has 2 components: the iron protein and the molybdenum-iron protein. This chain is Nitrogenase iron protein, found in Pectobacterium atrosepticum (strain SCRI 1043 / ATCC BAA-672) (Erwinia carotovora subsp. atroseptica).